A 254-amino-acid chain; its full sequence is Triosephosphate isomerase (254 aa).

9–11 is a binding site for substrate; the sequence is NWK. The Electrophile role is filled by H95. Residue E167 is the Proton acceptor of the active site. Substrate contacts are provided by residues G173, S213, and 234 to 235; that span reads GG.

Belongs to the triosephosphate isomerase family. As to quaternary structure, homodimer.

The protein localises to the cytoplasm. The catalysed reaction is D-glyceraldehyde 3-phosphate = dihydroxyacetone phosphate. It functions in the pathway carbohydrate biosynthesis; gluconeogenesis. It participates in carbohydrate degradation; glycolysis; D-glyceraldehyde 3-phosphate from glycerone phosphate: step 1/1. Involved in the gluconeogenesis. Catalyzes stereospecifically the conversion of dihydroxyacetone phosphate (DHAP) to D-glyceraldehyde-3-phosphate (G3P). In Roseiflexus castenholzii (strain DSM 13941 / HLO8), this protein is Triosephosphate isomerase.